We begin with the raw amino-acid sequence, 205 residues long: Small ribosomal subunit protein uS4 (205 aa).

A compositionally biased stretch (basic and acidic residues) spans 1–16 (MSKRESSKYKIDRRMG). Residues 1-46 (MSKRESSKYKIDRRMGENIWGRPKSPVNRREYGPGQHGQRRKGKLS) form a disordered region. Positions 94 to 157 (SRLDAIVYRA…KQLVTVLEAV (64 aa)) constitute an S4 RNA-binding domain.

It belongs to the universal ribosomal protein uS4 family. In terms of assembly, part of the 30S ribosomal subunit. Contacts protein S5. The interaction surface between S4 and S5 is involved in control of translational fidelity.

One of the primary rRNA binding proteins, it binds directly to 16S rRNA where it nucleates assembly of the body of the 30S subunit. In terms of biological role, with S5 and S12 plays an important role in translational accuracy. This chain is Small ribosomal subunit protein uS4, found in Rhizobium etli (strain CIAT 652).